Reading from the N-terminus, the 78-residue chain is Transmembrane protein 258 (78 aa).

Topologically, residues 1-18 (MDVMQRYVSPVNPAVFPH) are cytoplasmic. Residues 19–39 (LATVLLVIGTFFTAWFFIFVV) form a helical membrane-spanning segment. Over 40–53 (SRKSSKESTLIKEL) the chain is Cytoplasmic. A helical membrane pass occupies residues 54–74 (LISLCASIFLGFGIVFLLLTV). Residues 75–78 (GIYV) are Perinuclear space-facing.

It belongs to the OST5 family. In terms of assembly, homodimer. Component of the oligosaccharyltransferase (OST) complex. Interacts with klar and Msp300, components of LINC complex.

The protein localises to the nucleus outer membrane. It is found in the cytoplasm. The protein resides in the endoplasmic reticulum membrane. Subunit of the oligosaccharyl transferase (OST) complex that catalyzes the initial transfer of a defined glycan (Glc(3)Man(9)GlcNAc(2) in eukaryotes) from the lipid carrier dolichol-pyrophosphate to an asparagine residue within an Asn-X-Ser/Thr consensus motif in nascent polypeptide chains, the first step in protein N-glycosylation. N-glycosylation occurs cotranslationally and the complex associates with the Sec61 complex at the channel-forming translocon complex that mediates protein translocation across the endoplasmic reticulum (ER). All subunits are required for a maximal enzyme activity. In addition may regulates nuclear envelope (NE) architecture and nuclear positioning through the linker of nucleoskeleton and cytoskeleton (LINC)-dependent and -independent mechanisms. This Drosophila melanogaster (Fruit fly) protein is Transmembrane protein 258.